A 391-amino-acid chain; its full sequence is Phosphoprotein (391 aa).

Phosphothreonine occurs at positions 10, 16, and 39. A compositionally biased stretch (polar residues) spans 55–65 (KNIQYPTTSHQ). A disordered region spans residues 55–90 (KNIQYPTTSHQGSKSKGRGSGARPIIVSSSEGGTGG). Phosphoserine is present on S69. A phosphothreonine mark is found at T91, T150, and T165. The segment at 145–208 (TSTPVTEFKR…PQQDSTPANV (64 aa)) is disordered. Residue S188 is modified to Phosphoserine. The multimerization stretch occupies residues 216 to 279 (ISANEIMDLL…MATVKIMDPG (64 aa)). Residues 218–245 (ANEIMDLLRGMDARLQHLEQKVDKVLAQ) are a coiled coil. A Phosphothreonine modification is found at T250. S257 is subject to Phosphoserine. T258 and T282 each carry phosphothreonine. Phosphoserine is present on residues S292 and S294. Position 298 is a phosphothreonine (T298). Phosphoserine is present on residues S301 and S374. The segment at 343–391 (AGRKVMITKMITDCVANPQMKQVFEQRLAKASTEDALNDIKRDIIRSAI) is interaction with the nucleoprotein. T375 is subject to Phosphothreonine.

This sequence belongs to the rubulavirus/avulavirus P protein family. Homotetramer. Interacts (via multimerization domain) with polymerase L; this interaction forms the polymerase L-P complex. Interacts (via N-terminus) with N0 (via Ncore); this interaction allows P to chaperon N0 to avoid N polymerization before encapsidation. Interacts (via C-terminus) with N-RNA template; this interaction positions the polymerase on the template for both transcription and replication. Interacts with host RPS6KB1 kinase; this interaction may play a role in the viral replication and transcription.

Essential cofactor of the RNA polymerase L that plays a central role in the transcription and replication by forming the polymerase complex with RNA polymerase L and recruiting L to the genomic N-RNA template for RNA synthesis. Also plays a central role in the encapsidation of nascent RNA chains by forming the encapsidation complex with the nucleocapsid protein N (N-P complex). Acts as a chaperone for newly synthesized free N protein, so-called N0, allowing encapsidation of nascent RNA chains during replication. The nucleoprotein protein N prevents excessive phosphorylation of P, which leads to down-regulation of viral transcription/ replication. Participates, together with N, in the formation of viral factories (viroplasms), which are large inclusions in the host cytoplasm where replication takes place. The polypeptide is Phosphoprotein (Mumps virus genotype B (strain Miyahara vaccine) (MuV)).